A 226-amino-acid chain; its full sequence is Large ribosomal subunit protein uL1 (226 aa).

It belongs to the universal ribosomal protein uL1 family. Part of the 50S ribosomal subunit.

Its function is as follows. Binds directly to 23S rRNA. Probably involved in E site tRNA release. Functionally, protein L1 is also a translational repressor protein, it controls the translation of its operon by binding to its mRNA. The chain is Large ribosomal subunit protein uL1 from Korarchaeum cryptofilum (strain OPF8).